The following is a 391-amino-acid chain: Formate-dependent phosphoribosylglycinamide formyltransferase (391 aa).

N(1)-(5-phospho-beta-D-ribosyl)glycinamide contacts are provided by residues 20–21 and Glu-80; that span reads EL. Residues Arg-112, Lys-153, 158–163, 193–196, and Glu-201 contribute to the ATP site; these read SSGKGQ and EGFI. The 190-residue stretch at 117–306 folds into the ATP-grasp domain; the sequence is RLAAETLGLP…EFALHVRAIQ (190 aa). Mg(2+) contacts are provided by Glu-265 and Glu-277. N(1)-(5-phospho-beta-D-ribosyl)glycinamide contacts are provided by residues Asp-284, Lys-354, and 361–362; that span reads RR.

The protein belongs to the PurK/PurT family. As to quaternary structure, homodimer.

The enzyme catalyses N(1)-(5-phospho-beta-D-ribosyl)glycinamide + formate + ATP = N(2)-formyl-N(1)-(5-phospho-beta-D-ribosyl)glycinamide + ADP + phosphate + H(+). Its pathway is purine metabolism; IMP biosynthesis via de novo pathway; N(2)-formyl-N(1)-(5-phospho-D-ribosyl)glycinamide from N(1)-(5-phospho-D-ribosyl)glycinamide (formate route): step 1/1. Involved in the de novo purine biosynthesis. Catalyzes the transfer of formate to 5-phospho-ribosyl-glycinamide (GAR), producing 5-phospho-ribosyl-N-formylglycinamide (FGAR). Formate is provided by PurU via hydrolysis of 10-formyl-tetrahydrofolate. This Shewanella baltica (strain OS185) protein is Formate-dependent phosphoribosylglycinamide formyltransferase.